The following is a 385-amino-acid chain: Queuine tRNA-ribosyltransferase (385 aa).

Asp-93 serves as the catalytic Proton acceptor. Substrate-binding positions include 93–97, Asp-147, Gln-191, and Gly-218; that span reads DSGGF. Residues 249–255 are RNA binding; the sequence is GVGKPED. Asp-268 serves as the catalytic Nucleophile. The tract at residues 273–277 is RNA binding; important for wobble base 34 recognition; sequence TRNAR. Zn(2+)-binding residues include Cys-306, Cys-308, Cys-311, and His-337.

It belongs to the queuine tRNA-ribosyltransferase family. Homodimer. Within each dimer, one monomer is responsible for RNA recognition and catalysis, while the other monomer binds to the replacement base PreQ1. The cofactor is Zn(2+).

The enzyme catalyses 7-aminomethyl-7-carbaguanine + guanosine(34) in tRNA = 7-aminomethyl-7-carbaguanosine(34) in tRNA + guanine. It participates in tRNA modification; tRNA-queuosine biosynthesis. Catalyzes the base-exchange of a guanine (G) residue with the queuine precursor 7-aminomethyl-7-deazaguanine (PreQ1) at position 34 (anticodon wobble position) in tRNAs with GU(N) anticodons (tRNA-Asp, -Asn, -His and -Tyr). Catalysis occurs through a double-displacement mechanism. The nucleophile active site attacks the C1' of nucleotide 34 to detach the guanine base from the RNA, forming a covalent enzyme-RNA intermediate. The proton acceptor active site deprotonates the incoming PreQ1, allowing a nucleophilic attack on the C1' of the ribose to form the product. After dissociation, two additional enzymatic reactions on the tRNA convert PreQ1 to queuine (Q), resulting in the hypermodified nucleoside queuosine (7-(((4,5-cis-dihydroxy-2-cyclopenten-1-yl)amino)methyl)-7-deazaguanosine). This chain is Queuine tRNA-ribosyltransferase, found in Pasteurella multocida (strain Pm70).